Reading from the N-terminus, the 70-residue chain is Large ribosomal subunit protein bL31c (70 aa).

The protein belongs to the bacterial ribosomal protein bL31 family. Type A subfamily. In terms of assembly, part of the 50S ribosomal subunit.

The protein resides in the plastid. It is found in the chloroplast. Its function is as follows. Binds the 23S rRNA. In Pyropia yezoensis (Susabi-nori), this protein is Large ribosomal subunit protein bL31c.